Reading from the N-terminus, the 164-residue chain is GTP-dependent dephospho-CoA kinase (164 aa).

GTP is bound by residues Asp-40, Val-41, Val-42, Asp-59, Lys-61, and Glu-113.

It belongs to the GTP-dependent DPCK family.

The enzyme catalyses 3'-dephospho-CoA + GTP = GDP + CoA + H(+). It participates in cofactor biosynthesis; coenzyme A biosynthesis. Catalyzes the GTP-dependent phosphorylation of the 3'-hydroxyl group of dephosphocoenzyme A to form coenzyme A (CoA). This chain is GTP-dependent dephospho-CoA kinase, found in Sulfolobus acidocaldarius (strain ATCC 33909 / DSM 639 / JCM 8929 / NBRC 15157 / NCIMB 11770).